Reading from the N-terminus, the 369-residue chain is Phenylalanine--tRNA ligase alpha subunit (369 aa).

Glu272 is a binding site for Mg(2+).

It belongs to the class-II aminoacyl-tRNA synthetase family. Phe-tRNA synthetase alpha subunit type 1 subfamily. As to quaternary structure, tetramer of two alpha and two beta subunits. Mg(2+) serves as cofactor.

Its subcellular location is the cytoplasm. The enzyme catalyses tRNA(Phe) + L-phenylalanine + ATP = L-phenylalanyl-tRNA(Phe) + AMP + diphosphate + H(+). The polypeptide is Phenylalanine--tRNA ligase alpha subunit (Cutibacterium acnes (strain DSM 16379 / KPA171202) (Propionibacterium acnes)).